Reading from the N-terminus, the 439-residue chain is GTPase Der (439 aa).

EngA-type G domains lie at 2–166 and 176–351; these read SVVA…PAPA and TRLA…IEFN. GTP is bound by residues 8–15, 55–59, 118–121, 182–189, 229–233, and 294–297; these read GRPNVGKS, DTGGF, NKVD, DTAGI, and NKWD. The region spanning 352 to 436 is the KH-like domain; it reads RQVPTGVLNR…PIRLKFKDRN (85 aa).

This sequence belongs to the TRAFAC class TrmE-Era-EngA-EngB-Septin-like GTPase superfamily. EngA (Der) GTPase family. Associates with the 50S ribosomal subunit.

Its function is as follows. GTPase that plays an essential role in the late steps of ribosome biogenesis. The chain is GTPase Der from Syntrophotalea carbinolica (strain DSM 2380 / NBRC 103641 / GraBd1) (Pelobacter carbinolicus).